We begin with the raw amino-acid sequence, 7311 residues long: MAM and LDL-receptor class A domain-containing protein 2 (7311 aa).

MAM domains lie at 4–171, 199–361, 363–530, 532–695, 727–887, 889–1050, 1052–1220, 1228–1392, 1394–1557, 1559–1722, 1755–1918, 1920–2087, 2089–2254, 2274–2437, 2439–2601, and 2603–2771; these read AYCD…SCVT, LDCD…FCSP, KQCT…VCPP, GDCN…NCPV, YDCT…QCPV, MQCS…ACPL, GDCT…RCRL, FDCN…SCPS, GMCS…SCPA, GDCS…NCIQ, NDCN…KCPS, TDCT…PCPL, GDCD…RCSV, NNCT…PCPP, TVCD…PCPP, and GSCD…YCVG. Residues 2461 to 2481 form a disordered region; sequence WKRDSGGTPSAGTGPSRDHTT. Positions 2466-2475 are enriched in low complexity; that stretch reads GGTPSAGTGP. 2 P-type domains span residues 2771 to 2817 and 2818 to 2862; these read GLCS…FYHP and SACA…FHGP. Cystine bridges form between C2773-C2802, C2784-C2801, C2795-C2813, C2820-C2847, C2831-C2846, and C2841-C2858. MAM domains are found at residues 2883-3048, 3050-3214, 3216-3384, and 3429-3587; these read WDCT…TCPP, RECD…PCPP, GSCD…FCPS, and GACT…NCTL. An LDL-receptor class A 1 domain is found at 3593-3628; sequence SCGQQHRCIRGSCIDRGRVCDYTDDCGDNSDEQNCY. Intrachain disulfides connect C3594–C3605, C3600–C3618, and C3612–C3627. One can recognise an MAM 21 domain in the interval 3632 to 3794; sequence YRCSFEKSLC…DLSMTSSCQS (163 aa). LDL-receptor class A domains follow at residues 3814 to 3850 and 4016 to 4054; these read PCPR…VNCG and SCIS…STCA. Disulfide bonds link C3815–C3827, C3822–C3840, and C3834–C3849. The 162-residue stretch at 3850-4011 folds into the MAM 22 domain; the sequence is GSCSFEPGLC…DDVTFQGCAL (162 aa). 3 disulfide bridges follow: C4017–C4029, C4024–C4042, and C4036–C4053. The 164-residue stretch at 4058 to 4221 folds into the MAM 23 domain; sequence ERCNFEQDLC…DVSFTPNCRP (164 aa). Residues 4239–4276 enclose the LDL-receptor class A 4 domain; the sequence is GCQPGKFKCANGGNCISVSKVCNFYSDCSGGSDEMNCP. Cystine bridges form between C4240–C4253, C4247–C4266, and C4260–C4275. The region spanning 4277–4438 is the MAM 24 domain; the sequence is ATCNFQNSFC…DDVSFEHCAE (162 aa). Residues 4444-4483 form the LDL-receptor class A 5 domain; the sequence is TCSGLSVFRCQSGHCIAMSGKCDFEPDCCDGSEETNIVCA. 3 cysteine pairs are disulfide-bonded: C4445-C4458, C4453-C4471, and C4465-C4482. Residues 4486–4646 form the MAM 25 domain; the sequence is NRCNFEAGLC…DISFTPDCVV (161 aa). 2 LDL-receptor class A domains span residues 4660–4699 and 4859–4899; these read PTQP…DLCG and YCSG…QSCS. Cystine bridges form between C4668/C4687, C4681/C4698, C4860/C4876, C4871/C4889, and C4883/C4898. The region spanning 4700–4862 is the MAM 26 domain; that stretch reads WPCDFQRGTC…NNYTLTYCSG (163 aa). The MAM 27 domain occupies 4903-5063; sequence SRCTFENGLC…SIAMKPSCQQ (161 aa). In terms of domain architecture, LDL-receptor class A 8 spans 5085–5122; that stretch reads NCVLPQVPCVSDGKCVSPSQVCDFNLDCADASDERSCP. 3 cysteine pairs are disulfide-bonded: C5086–C5099, C5093–C5112, and C5106–C5121. Residues 5123-5281 enclose the MAM 28 domain; that stretch reads HMCTFESDQC…DDIKFVDCAL (159 aa). In terms of domain architecture, LDL-receptor class A 9 spans 5287-5322; it reads SCPSQFTCARNSCVSNDYVCDFNDDCGDGSDETLCG. 3 cysteine pairs are disulfide-bonded: C5288–C5299, C5294–C5312, and C5306–C5321. The region spanning 5326–5489 is the MAM 29 domain; it reads TRCDFSRGSC…DVSFTTGCKQ (164 aa). The 40-residue stretch at 5513 to 5552 folds into the LDL-receptor class A 10 domain; it reads QCTTAEFNCFNQGSGACIPSTQVCNFQPNCNDGVDEQNCA. Disulfide bonds link C5514/C5529, C5521/C5542, and C5536/C5551. The region spanning 5554-5719 is the MAM 30 domain; the sequence is TKCSFDGGDF…DDIEFLNCVP (166 aa). Positions 5725–5763 constitute an LDL-receptor class A 11 domain; the sequence is KCTADEFQCARGGCIPKTSVCDFKADCMVGDVSDESSCS. Intrachain disulfides connect C5726-C5738, C5733-C5751, and C5745-C5762. One can recognise an MAM 31 domain in the interval 5768–5935; that stretch reads GQCDFEHGLC…LTPGCQICTD (168 aa). Positions 5957-5993 constitute an LDL-receptor class A 12 domain; that stretch reads PCSLQQYVCKNLRCVDKAQICNFKDDCGDNSDELPCG. 3 disulfide bridges follow: C5958–C5970, C5965–C5983, and C5977–C5992. An MAM 32 domain is found at 5994-6156; that stretch reads SNCTFEGDCY…DISFTDNCFV (163 aa). The segment at 6014–6034 is disordered; the sequence is NFHWRRRNGKTPSVGTGPTND. Polar residues predominate over residues 6023–6034; it reads KTPSVGTGPTND. One can recognise an LDL-receptor class A 13 domain in the interval 6161–6200; it reads TCTPNEVKCRTSGHCVAEQRVCDHVKDCNDGTDEDALICS. Disulfide bonds link C6162/C6175, C6169/C6188, and C6182/C6199. The MAM 33 domain maps to 6204–6365; sequence ASCDFDVNWC…DISFSAGCYK (162 aa). In terms of domain architecture, LDL-receptor class A 14 spans 6377–6414; that stretch reads RCSKVQFYCKADDLCINIHWKCDGEKDCTDGADEMLCP. Disulfide bonds link C6378–C6391, C6385–C6404, and C6398–C6413. MAM domains follow at residues 6430-6590, 6606-6779, 6808-6965, and 7173-7311; these read ANCN…NCAK, LDED…NCDF, GDCT…QCQF, and GSCN…YNNL.

As to expression, component of the acid-insoluble and acid-soluble organic matrix of the aragonitic skeleton (at protein level).

The protein localises to the secreted. This Acropora millepora (Staghorn coral) protein is MAM and LDL-receptor class A domain-containing protein 2.